The chain runs to 155 residues: Ribonuclease H (155 aa).

Positions 1 to 142 (MLKQVEIFTD…CDELARAAAM (142 aa)) constitute an RNase H type-1 domain. The Mg(2+) site is built by Asp-10, Glu-48, Asp-70, and Asp-134.

Belongs to the RNase H family. Monomer. Mg(2+) is required as a cofactor.

The protein resides in the cytoplasm. It carries out the reaction Endonucleolytic cleavage to 5'-phosphomonoester.. Endonuclease that specifically degrades the RNA of RNA-DNA hybrids. This is Ribonuclease H from Escherichia coli O127:H6 (strain E2348/69 / EPEC).